A 75-amino-acid chain; its full sequence is UPF0270 protein PST_1436 (75 aa).

This sequence belongs to the UPF0270 family.

The chain is UPF0270 protein PST_1436 from Stutzerimonas stutzeri (strain A1501) (Pseudomonas stutzeri).